A 193-amino-acid polypeptide reads, in one-letter code: Phosphatidylglycerophosphatase and protein-tyrosine phosphatase 1 (193 aa).

A mitochondrion-targeting transit peptide spans 1-31; that stretch reads MAASAWLEAGLARVLFYPTLLYTVFRGRVGG. The region spanning 37–188 is the Tyrosine-protein phosphatase domain; the sequence is WYHRIDHTVL…LKEFHKEIAA (152 aa). N6-succinyllysine is present on K85. C132 (phosphocysteine intermediate) is an active-site residue.

This sequence belongs to the protein-tyrosine phosphatase family. Non-receptor class dual specificity subfamily. As to quaternary structure, interacts with STYXL1; the interaction inhibits PTPMT1 catalytic activity. Expressed in liver and in pancreatic beta cells.

The protein resides in the mitochondrion inner membrane. It catalyses the reaction O-phospho-L-tyrosyl-[protein] + H2O = L-tyrosyl-[protein] + phosphate. The enzyme catalyses O-phospho-L-seryl-[protein] + H2O = L-seryl-[protein] + phosphate. It carries out the reaction O-phospho-L-threonyl-[protein] + H2O = L-threonyl-[protein] + phosphate. The catalysed reaction is a 1,2-diacyl-sn-glycero-3-phospho-(1'-sn-glycero-3'-phosphate) + H2O = a 1,2-diacyl-sn-glycero-3-phospho-(1'-sn-glycerol) + phosphate. It catalyses the reaction 1,2-di-(9Z-octadecenoyl)-sn-glycero-3-phospho-(1'-sn-glycerol-3'-phosphate) + H2O = 1,2-di-(9Z-octadecenoyl)-sn-glycero-3-phospho-(1'-sn-glycerol) + phosphate. The enzyme catalyses 1,2-dioctanoyl-sn-glycero-3-phospho-(1D-myo-inositol-5-phosphate) + H2O = 1,2-dioctanoyl-sn-glycero-3-phospho-(1D-myo-inositol) + phosphate. It carries out the reaction a 1-acyl-2-hexanoyl-sn-glycero-3-phospho-(1D-myo-inositol-5-phosphate) + H2O = a 1-acyl-2-hexanoyl-sn-glycero-3-phospho-(1D-myo-inositol) + phosphate. The catalysed reaction is 1,2-dibutyryl-sn-glycero-3-phospho-(1D-myo-inositol-5-phosphate) + H2O = 1,2-dibutyryl-sn-glycero-3-phospho-(1D-myo-inositol) + phosphate. It participates in phospholipid metabolism; phosphatidylglycerol biosynthesis; phosphatidylglycerol from CDP-diacylglycerol: step 2/2. In terms of biological role, lipid phosphatase which dephosphorylates phosphatidylglycerophosphate (PGP) to phosphatidylglycerol (PG). PGP is an essential intermediate in the biosynthetic pathway of cardiolipin, a mitochondrial-specific phospholipid regulating the membrane integrity and activities of the organelle. Has also been shown to display phosphatase activity toward phosphoprotein substrates, specifically mediates dephosphorylation of mitochondrial proteins, thereby playing an essential role in ATP production. Has probably a preference for proteins phosphorylated on Ser and/or Thr residues compared to proteins phosphorylated on Tyr residues. Probably involved in regulation of insulin secretion in pancreatic beta cells. May prevent intrinsic apoptosis, probably by regulating mitochondrial membrane integrity. This is Phosphatidylglycerophosphatase and protein-tyrosine phosphatase 1 from Rattus norvegicus (Rat).